Here is a 136-residue protein sequence, read N- to C-terminus: Lymphocyte antigen 6E (136 aa).

An N-terminal signal peptide occupies residues 1–26; that stretch reads MSATSNMRVFLPVLLAALLGMEQVHS. In terms of domain architecture, UPAR/Ly6 spans 27–118; it reads LMCFSCTDQK…AGLGLRASIP (92 aa). Disulfide bonds link Cys-29-Cys-54, Cys-32-Cys-41, Cys-47-Cys-76, Cys-80-Cys-98, and Cys-99-Cys-104. N-linked (GlcNAc...) asparagine glycosylation is present at Asn-105. Ala-108 carries the GPI-anchor amidated alanine lipid modification. The propeptide at 109–136 is removed in mature form; it reads AGLGLRASIPLLGLGLLLSLLALLQLSP.

As to quaternary structure, interacts with CHRNA4. Interacts with CD3Z/CD247. Ubiquitously expressed in mouse adult tissues with maximal expression in the lung and the salivary gland. Expression is strikingly lower in the fetal tissues except for the placenta. Present in thymus where its expression is observed in immature thymocytes and thymic stromal cells. Also found on functionally active T-cells as well as B-cells and thymic dendritic cells.

Its subcellular location is the cell membrane. Functionally, GPI-anchored cell surface protein that regulates T-lymphocytes proliferation, differentiation, and activation. Regulates the T-cell receptor (TCR) signaling by interacting with component CD3Z/CD247 at the plasma membrane, leading to CD3Z/CD247 phosphorylation modulation. Restricts the entry of murine coronavirus, mouse hepatitis virus, by interfering with spike protein-mediated membrane fusion. Also plays an essential role in placenta formation by acting as the main receptor for syncytin-A (SynA). Therefore, participates in the normal fusion of syncytiotrophoblast layer I (SynT-I) and in the proper morphogenesis of both fetal and maternal vasculatures within the placenta. May also act as a modulator of nicotinic acetylcholine receptors (nAChRs) activity. In vitro inhibits alpha-3:beta-4-containing nAChRs maximum response. The sequence is that of Lymphocyte antigen 6E from Mus musculus (Mouse).